A 524-amino-acid polypeptide reads, in one-letter code: Serine/threonine-protein kinase PAK 2 (524 aa).

The tract at residues 1–81 (MSDNGELEDK…PEISPPSDFE (81 aa)) is disordered. Serine 2 is modified (N-acetylserine). Residues serine 2, serine 20, serine 55, and serine 58 each carry the phosphoserine modification. Phosphothreonine is present on threonine 60. N6-acetyllysine is present on lysine 62. Serine 64 bears the Phosphoserine mark. The span at 67 to 81 (KEKERPEISPPSDFE) shows a compositional bias: basic and acidic residues. The segment at 69-112 (KERPEISPPSDFEHTIHVGFDAVTGEFTGMPEQWARLLQTSNIT) is GTPase-binding. Positions 69–137 (KERPEISPPS…KFYDSNTVKQ (69 aa)) are autoregulatory region. In terms of domain architecture, CRIB spans 74–87 (ISPPSDFEHTIHVG). Position 128 is an N6-acetyllysine (lysine 128). Residue threonine 134 is modified to Phosphothreonine. Tyrosine 139 carries the phosphotyrosine modification. At serine 141 the chain carries Phosphoserine. Threonine 143 is modified (phosphothreonine). Disordered regions lie at residues 143-164 (TPPE…GTEA) and 169-188 (TEEE…PRPD). Serine 152 is subject to Phosphoserine. A phosphothreonine mark is found at threonine 154 and threonine 169. Positions 169-178 (TEEEDDDEET) are enriched in acidic residues. Serine 197 bears the Phosphoserine mark. A lipid anchor (N-myristoyl glycine; in form PAK-2p34) is attached at glycine 213. The short motif at 245–251 (PKKKYTR) is the Nuclear localization signal element. The region spanning 249–499 (YTRYEKIGQG…SAKELLQHPF (251 aa)) is the Protein kinase domain. Residues 255 to 263 (IGQGASGTV) and lysine 278 each bind ATP. Arginine 367 (proton acceptor) is an active-site residue. Threonine 402 carries the phosphothreonine; by autocatalysis modification.

The protein belongs to the protein kinase superfamily. STE Ser/Thr protein kinase family. STE20 subfamily. As to quaternary structure, interacts tightly with GTP-bound but not GDP-bound CDC42/p21 and RAC1. Interacts with SH3MD4. Interacts with SCRIB. Interacts with ARHGEF7 and GIT1. PAK-2p34 interacts with ARHGAP10. In terms of assembly, (Microbial infection) Interacts with and activated by HIV-1 Nef. Post-translationally, full-length PAK2 is autophosphorylated when activated by CDC42/p21. Following cleavage, both peptides, PAK-2p27 and PAK-2p34, become highly autophosphorylated, with PAK-2p27 being phosphorylated on serine and PAK-2p34 on threonine residues, respectively. Autophosphorylation of PAK-2p27 can occur in the absence of any effectors and is dependent on phosphorylation of Thr-402, because PAK-2p27 is acting as an exogenous substrate. During apoptosis proteolytically cleaved by caspase-3 or caspase-3-like proteases to yield active PAK-2p34. In terms of processing, ubiquitinated, leading to its proteasomal degradation. Post-translationally, PAK-2p34 is myristoylated. As to expression, ubiquitously expressed. Higher levels seen in skeletal muscle, ovary, thymus and spleen.

The protein localises to the cytoplasm. It is found in the nucleus. It localises to the perinuclear region. The protein resides in the membrane. The catalysed reaction is L-seryl-[protein] + ATP = O-phospho-L-seryl-[protein] + ADP + H(+). The enzyme catalyses L-threonyl-[protein] + ATP = O-phospho-L-threonyl-[protein] + ADP + H(+). With respect to regulation, activated by binding small G proteins. Binding of GTP-bound CDC42 or RAC1 to the autoregulatory region releases monomers from the autoinhibited dimer, enables phosphorylation of Thr-402 and allows the kinase domain to adopt an active structure. Following caspase cleavage, autophosphorylated PAK-2p34 is constitutively active. Its function is as follows. Serine/threonine protein kinase that plays a role in a variety of different signaling pathways including cytoskeleton regulation, cell motility, cell cycle progression, apoptosis or proliferation. Acts as a downstream effector of the small GTPases CDC42 and RAC1. Activation by the binding of active CDC42 and RAC1 results in a conformational change and a subsequent autophosphorylation on several serine and/or threonine residues. Full-length PAK2 stimulates cell survival and cell growth. Phosphorylates MAPK4 and MAPK6 and activates the downstream target MAPKAPK5, a regulator of F-actin polymerization and cell migration. Phosphorylates JUN and plays an important role in EGF-induced cell proliferation. Phosphorylates many other substrates including histone H4 to promote assembly of H3.3 and H4 into nucleosomes, BAD, ribosomal protein S6, or MBP. Phosphorylates CASP7, thereby preventing its activity. Additionally, associates with ARHGEF7 and GIT1 to perform kinase-independent functions such as spindle orientation control during mitosis. On the other hand, apoptotic stimuli such as DNA damage lead to caspase-mediated cleavage of PAK2, generating PAK-2p34, an active p34 fragment that translocates to the nucleus and promotes cellular apoptosis involving the JNK signaling pathway. Caspase-activated PAK2 phosphorylates MKNK1 and reduces cellular translation. The polypeptide is Serine/threonine-protein kinase PAK 2 (PAK2) (Homo sapiens (Human)).